Reading from the N-terminus, the 361-residue chain is Biotin synthase (361 aa).

In terms of domain architecture, Radical SAM core spans 63 to 290 (NTVQLSTLLS…RAMVRLSAGR (228 aa)). [4Fe-4S] cluster contacts are provided by Cys78, Cys82, and Cys85. [2Fe-2S] cluster-binding residues include Cys122, Cys153, Cys213, and Arg285.

Belongs to the radical SAM superfamily. Biotin synthase family. Homodimer. [4Fe-4S] cluster is required as a cofactor. [2Fe-2S] cluster serves as cofactor.

It carries out the reaction (4R,5S)-dethiobiotin + (sulfur carrier)-SH + 2 reduced [2Fe-2S]-[ferredoxin] + 2 S-adenosyl-L-methionine = (sulfur carrier)-H + biotin + 2 5'-deoxyadenosine + 2 L-methionine + 2 oxidized [2Fe-2S]-[ferredoxin]. The protein operates within cofactor biosynthesis; biotin biosynthesis; biotin from 7,8-diaminononanoate: step 2/2. Catalyzes the conversion of dethiobiotin (DTB) to biotin by the insertion of a sulfur atom into dethiobiotin via a radical-based mechanism. In Paraburkholderia phytofirmans (strain DSM 17436 / LMG 22146 / PsJN) (Burkholderia phytofirmans), this protein is Biotin synthase.